The sequence spans 177 residues: Large ribosomal subunit protein bL9 (177 aa).

The tract at residues 151–177 is disordered; sequence EDEEIAEAAPVAEAQAEADGHSTEETA. Residues 157–167 are compositionally biased toward low complexity; it reads EAAPVAEAQAE. Over residues 168–177 the composition is skewed to basic and acidic residues; it reads ADGHSTEETA.

It belongs to the bacterial ribosomal protein bL9 family.

Binds to the 23S rRNA. This Solidesulfovibrio magneticus (strain ATCC 700980 / DSM 13731 / RS-1) (Desulfovibrio magneticus) protein is Large ribosomal subunit protein bL9.